Reading from the N-terminus, the 1063-residue chain is Structural polyprotein (1063 aa).

Positions 1–131 are disordered; it reads MASTTPITME…LGPPTNPFQA (131 aa). The interval 30-69 is human C1QBP/SF2P32-binding; it reads GASQPRRPRPPRQRDSSTSGDDSGRDSGGPRRRRGNRGRG. Residue S46 is modified to Phosphoserine; by host. Residues 59-69 are compositionally biased toward basic residues; the sequence is PRRRRGNRGRG. The segment covering 70-87 has biased composition (basic and acidic residues); the sequence is QRKDWSRAPPPPEERQEG. Pro residues predominate over residues 93–107; sequence APKPSRAPPQQPQPP. C153 and C197 are disulfide-bonded. The tract at residues 279–300 is functions as E2 signal peptide; it reads GAPQAFLAGLLLAAVAVGTARA. Over 301-534 the chain is Extracellular; the sequence is GLQPRVDMAA…LWLATANALS (234 aa). N-linked (GlcNAc...) asparagine; by host glycosylation is found at N353, N371, and N429. The helical transmembrane segment at 535 to 555 threads the bilayer; it reads LDHALAAFVLLVPWVLIFMVC. At 556 to 582 the chain is on the cytoplasmic side; the sequence is RRACRRRGAAAALTAVVLQGYNPPAYG. The functions as E1 signal peptide stretch occupies residues 563–582; that stretch reads GAAAALTAVVLQGYNPPAYG. Residues 583–1028 lie on the Extracellular side of the membrane; it reads EEAFTYLCTA…QTWAEWAAAH (446 aa). 8 disulfides stabilise this stretch: C590–C595, C619–C824, C641–C653, C699–C712, C758–C767, C807–C817, C931–C934, and C950–C983. N-linked (GlcNAc...) asparagine; by host glycosylation is present at N658. Ca(2+)-binding residues include N670 and A671. 2 residues coordinate Ca(2+): D718 and T719. An N-linked (GlcNAc...) asparagine; by host glycan is attached at N791. O-linked (GalNAc...) threonine; by host glycosylation is found at T1011 and T1012. A helical transmembrane segment spans residues 1029 to 1049; the sequence is WWQLTLGAICALPLAGLLACC. Residues 1050–1063 are Extracellular-facing; sequence AKCLYYLRGAIAPR.

As to quaternary structure, homodimer; further assembles into homooligomer. Interacts with human C1QBP. Interacts (via N-terminus) with protease/methyltransferase p150. Heterodimer with spike glycoprotein E2. In terms of assembly, heterodimer with spike glycoprotein E1. Structural polyprotein: Specific enzymatic cleavages in vivo yield mature proteins. Two signal peptidase-mediated cleavages within the polyprotein produce the structural proteins capsid, E2, and E1. The E2 signal peptide remains attached to the C-terminus of the capsid protein after cleavage by the signal peptidase. Another signal peptide at E2 C-terminus directs E1 to the ER, with a similar mechanism. In terms of processing, contains three N-linked oligosaccharides. Post-translationally, capsid is phosphorylated on Ser-46 by host. This phosphorylation negatively regulates capsid protein RNA-binding activity. Dephosphorylated by human PP1A.

The protein localises to the virion. The protein resides in the host cytoplasm. Its subcellular location is the host mitochondrion. It localises to the virion membrane. It is found in the host Golgi apparatus membrane. In terms of biological role, capsid protein interacts with genomic RNA and assembles into icosahedric core particles 65-70 nm in diameter. The resulting nucleocapsid eventually associates with the cytoplasmic domain of E2 at the cell membrane, leading to budding and formation of mature virions from host Golgi membranes. Phosphorylation negatively regulates RNA-binding activity, possibly delaying virion assembly during the viral replication phase. Capsid protein dimerizes and becomes disulfide-linked in the virion. Modulates genomic RNA replication. Modulates subgenomic RNA synthesis by interacting with human C1QBP/SF2P32. Induces both perinuclear clustering of mitochondria and the formation of electron-dense intermitochondrial plaques, both hallmarks of rubella virus infected cells. Induces apoptosis when expressed in transfected cells. Functionally, responsible for viral attachment to target host cell, by binding to the cell receptor. Its transport to the plasma membrane depends on interaction with E1 protein. The surface glycoproteins display an irregular helical organization and a pseudo-tetrameric inner nucleocapsid arrangement. Class II viral fusion protein. Fusion activity is inactive as long as E1 is bound to E2 in mature virion. After virus attachment to target cell and clathrin-mediated endocytosis, acidification of the endosome would induce dissociation of E1/E2 heterodimer and concomitant trimerization of the E1 subunits. This E1 homotrimer is fusion active, and promotes release of viral nucleocapsid in cytoplasm after endosome and viral membrane fusion. The cytoplasmic tail of spike glycoprotein E1 modulates virus release. The surface glycoproteins display an irregular helical organization and a pseudo-tetrameric inner nucleocapsid arrangement. In Rubella virus (strain Cendehill) (RUBV), this protein is Structural polyprotein.